A 217-amino-acid chain; its full sequence is Probable cutinase 3 (217 aa).

A signal peptide spans 1 to 17 (MSLRSLFVAGLATLALA). Cystine bridges form between Cys39–Cys118 and Cys65–Cys79. Ser129 functions as the Nucleophile in the catalytic mechanism. The cysteines at positions 180 and 187 are disulfide-linked. The active site involves Asp184. His197 (proton donor/acceptor) is an active-site residue.

Belongs to the cutinase family.

The protein localises to the secreted. It catalyses the reaction cutin + H2O = cutin monomers.. Functionally, catalyzes the hydrolysis of complex carboxylic polyesters found in the cell wall of plants. Degrades cutin, a macromolecule that forms the structure of the plant cuticle. The chain is Probable cutinase 3 from Aspergillus fumigatus (strain CBS 144.89 / FGSC A1163 / CEA10) (Neosartorya fumigata).